A 503-amino-acid polypeptide reads, in one-letter code: Probable cytosol aminopeptidase (503 aa).

Mn(2+) is bound by residues K270 and D275. K282 is a catalytic residue. D293, D352, and E354 together coordinate Mn(2+). R356 is a catalytic residue.

It belongs to the peptidase M17 family. Mn(2+) serves as cofactor.

It localises to the cytoplasm. It catalyses the reaction Release of an N-terminal amino acid, Xaa-|-Yaa-, in which Xaa is preferably Leu, but may be other amino acids including Pro although not Arg or Lys, and Yaa may be Pro. Amino acid amides and methyl esters are also readily hydrolyzed, but rates on arylamides are exceedingly low.. The enzyme catalyses Release of an N-terminal amino acid, preferentially leucine, but not glutamic or aspartic acids.. Presumably involved in the processing and regular turnover of intracellular proteins. Catalyzes the removal of unsubstituted N-terminal amino acids from various peptides. The protein is Probable cytosol aminopeptidase of Escherichia coli O139:H28 (strain E24377A / ETEC).